Reading from the N-terminus, the 460-residue chain is Protein btn1 (460 aa).

11 helical membrane-spanning segments follow: residues 42-62 (VCVAFWLFGLINNVLYVVILS), 76-96 (VVLLADVIPSFATKLIAPYFI), 105-125 (IIIFVFLSAAGMLLVALSPPY), 135-155 (LAGIVLASLSSGGGELSFVGL), 164-184 (LAAWGSGTGAAGLVGAGAYAL), 195-215 (ATLLASSCLPAVMVVSFFMVL), 287-307 (GLFFPFMLPLLLVYVAEYTIN), 323-343 (FAHFRAFYPAYNAIYQVGVFI), 356-376 (LYLPSFLQILNLVLLTLQAVF), 378-398 (FIPSVYIIFIIIFWEGLLGGL), and 428-448 (AAGICIAGFVSMVFEVWLCDW).

This sequence belongs to the battenin family.

The protein localises to the vacuole membrane. Its function is as follows. Involved in vacuolar transport and vacuole pH homeostasis. Also required for cytokinesis. In Aspergillus fumigatus (strain ATCC MYA-4609 / CBS 101355 / FGSC A1100 / Af293) (Neosartorya fumigata), this protein is Protein btn1 (btn1).